We begin with the raw amino-acid sequence, 303 residues long: Ornithine carbamoyltransferase (303 aa).

Carbamoyl phosphate-binding positions include 52–55 (STRT), Gln-79, Arg-103, and 130–133 (HPCQ). Residues Asn-161, Asp-221, and 225–226 (SM) each bind L-ornithine. Carbamoyl phosphate contacts are provided by residues 260-261 (CL) and Arg-288.

The protein belongs to the aspartate/ornithine carbamoyltransferase superfamily. OTCase family.

It is found in the cytoplasm. The enzyme catalyses carbamoyl phosphate + L-ornithine = L-citrulline + phosphate + H(+). It functions in the pathway amino-acid biosynthesis; L-arginine biosynthesis; L-arginine from L-ornithine and carbamoyl phosphate: step 1/3. Functionally, reversibly catalyzes the transfer of the carbamoyl group from carbamoyl phosphate (CP) to the N(epsilon) atom of ornithine (ORN) to produce L-citrulline. This Rhizobium meliloti (strain 1021) (Ensifer meliloti) protein is Ornithine carbamoyltransferase (argF).